The following is a 161-amino-acid chain: NAD(P)H-quinone oxidoreductase subunit I, chloroplastic (161 aa).

2 consecutive 4Fe-4S ferredoxin-type domains span residues 55–84 and 95–124; these read GRIH…VDWK and LNYS…MTEE. The [4Fe-4S] cluster site is built by Cys64, Cys67, Cys70, Cys74, Cys104, Cys107, Cys110, and Cys114.

Belongs to the complex I 23 kDa subunit family. NDH is composed of at least 16 different subunits, 5 of which are encoded in the nucleus. [4Fe-4S] cluster serves as cofactor.

It is found in the plastid. It localises to the chloroplast thylakoid membrane. The catalysed reaction is a plastoquinone + NADH + (n+1) H(+)(in) = a plastoquinol + NAD(+) + n H(+)(out). The enzyme catalyses a plastoquinone + NADPH + (n+1) H(+)(in) = a plastoquinol + NADP(+) + n H(+)(out). NDH shuttles electrons from NAD(P)H:plastoquinone, via FMN and iron-sulfur (Fe-S) centers, to quinones in the photosynthetic chain and possibly in a chloroplast respiratory chain. The immediate electron acceptor for the enzyme in this species is believed to be plastoquinone. Couples the redox reaction to proton translocation, and thus conserves the redox energy in a proton gradient. This chain is NAD(P)H-quinone oxidoreductase subunit I, chloroplastic, found in Lotus japonicus (Lotus corniculatus var. japonicus).